The primary structure comprises 647 residues: Zinc finger protein 567 (647 aa).

Positions 32-77 constitute a KRAB domain; the sequence is MDVMLENYCHLISVGCHMTKPDVILKLERGEEPWTSFKGHTCLEEN. Glycyl lysine isopeptide (Lys-Gly) (interchain with G-Cter in SUMO2) cross-links involve residues Lys173, Lys202, and Lys217. The C2H2-type 1; degenerate zinc finger occupies 210-232; it reads FEYNDCEKAFLKRGGPVTHSRTY. 7 consecutive C2H2-type zinc fingers follow at residues 253–275, 281–303, 309–331, 337–359, 365–387, 393–415, and 421–443; these read HTCT…QGIH, YQCH…QRTH, FVCN…QRTH, YECP…QRTH, YECS…QRIH, YICK…QRTH, and YICN…EKTH. Lys447 is covalently cross-linked (Glycyl lysine isopeptide (Lys-Gly) (interchain with G-Cter in SUMO2)). 7 consecutive C2H2-type zinc fingers follow at residues 449–471, 477–499, 505–527, 533–555, 561–583, 589–611, and 617–639; these read YICN…QRTH, YECP…HRTH, YECN…QRIH, YICN…QKIH, YECP…QRTH, and YKCS…QRTH.

This sequence belongs to the krueppel C2H2-type zinc-finger protein family.

The protein resides in the nucleus. Its function is as follows. May be involved in transcriptional regulation. The sequence is that of Zinc finger protein 567 (ZNF567) from Bos taurus (Bovine).